Reading from the N-terminus, the 88-residue chain is Small ribosomal subunit protein bS18B (88 aa).

This sequence belongs to the bacterial ribosomal protein bS18 family. Part of the 30S ribosomal subunit. Forms a tight heterodimer with protein bS6.

In terms of biological role, binds as a heterodimer with protein bS6 to the central domain of the 16S rRNA, where it helps stabilize the platform of the 30S subunit. The chain is Small ribosomal subunit protein bS18B from Roseiflexus castenholzii (strain DSM 13941 / HLO8).